Here is a 357-residue protein sequence, read N- to C-terminus: MVEPANTVGIPVNHIPLLKDELDIVIPTIRNLDFLEMWRPFLQPYHLIIVQDGDPSKTIAVPEGFDYELYNRNDINRILGPKASCISFKDSACRCFGYMVSKKKYIFTIDDDCFVAKDPSGKAVNALEQHIKNLLCPSTPFFFNTLYDPYREGADFVRGYPFSLREGVSTAVSHGLWLNIPDYDAPTQLVKPKERNTRYVDAVMTIPKGTLFPMCGMNLAFDRELIGPAMYFGLMGDGQPIGRYDDMWAGWCIKVICDHLGLGVKTGLPYIYHSKASNPFVNLKKEYKGIFWQEDIIPFFQSAKLTKEAVTVQQCYMELSKLVKEKLSPIDPYFDKLADAMVTWIEAWDELNPPTKA.

At valine 2 the chain carries N-acetylvaline. The DXD motif motif lies at 110–112 (DDD). Arginine 158 carries an N-linked (Glc...) arginine glycan.

It belongs to the RGP family. Heteromers with RGP2, RGP3, RGP4 and RGP5. Requires Mn(2+) as cofactor. The cofactor is Mg(2+). Post-translationally, reversibly glycosylated in vitro by UDP-glucose, UDP-xylose and UDP-galactose, but not UDP-mannose. Predominantly expressed in shoot and root apical meristems. Expressed in epidermal cells of leaves, inflorescence stems and seed coat. Expressed in pollen.

Its subcellular location is the cytoplasm. It localises to the cytosol. It is found in the golgi apparatus. The enzyme catalyses UDP-beta-L-arabinofuranose = UDP-beta-L-arabinopyranose. Functionally, UDP-L-arabinose mutase involved in the biosynthesis of cell wall non-cellulosic polysaccharides. Catalyzes the interconvertion of UDP-L-arabinopyranose (UDP-Arap) and UDP-L-arabinofuranose (UDP-Araf) in vitro. Preferentially catalyzes the formation of UDP-Arap from UDP-Araf. At thermodynamic equilibrium in vitro the ratio of the pyranose form over the furanose form is 95:5. Is not active on other UDP-sugars (UDP-Gal, UDP-Xyl, UDP-Glc, GDP-Man and GDP-Fuc). Functions redundantly with RGP2 and is essential for proper cell walls and pollen development. Probably involved in the formation of the pectocellulosic cell wall layer intine. Is probably active as heteromer in vivo. This chain is UDP-arabinopyranose mutase 1, found in Arabidopsis thaliana (Mouse-ear cress).